Here is a 201-residue protein sequence, read N- to C-terminus: LexA repressor (201 aa).

A DNA-binding region (H-T-H motif) is located at residues 28 to 48 (MRDIAAHLRISGTLGVSKHLT). Catalysis depends on for autocatalytic cleavage activity residues Ser-120 and Lys-157.

It belongs to the peptidase S24 family. Homodimer.

It carries out the reaction Hydrolysis of Ala-|-Gly bond in repressor LexA.. Functionally, represses a number of genes involved in the response to DNA damage (SOS response), including recA and lexA. In the presence of single-stranded DNA, RecA interacts with LexA causing an autocatalytic cleavage which disrupts the DNA-binding part of LexA, leading to derepression of the SOS regulon and eventually DNA repair. This is LexA repressor from Geobacter metallireducens (strain ATCC 53774 / DSM 7210 / GS-15).